Reading from the N-terminus, the 721-residue chain is Catalase-peroxidase (721 aa).

Positions 89-212 form a cross-link, tryptophyl-tyrosyl-methioninium (Trp-Tyr) (with M-238); that stretch reads WHSAGTYRTG…LAAVQMGLIY (124 aa). The active-site Proton acceptor is histidine 90. A cross-link (tryptophyl-tyrosyl-methioninium (Tyr-Met) (with W-89)) is located at residues 212–238; it reads YVNPEGPNGDPDPFAAAVDIRETFARM. Histidine 253 is a heme b binding site.

It belongs to the peroxidase family. Peroxidase/catalase subfamily. In terms of assembly, homodimer or homotetramer. Heme b serves as cofactor. Formation of the three residue Trp-Tyr-Met cross-link is important for the catalase, but not the peroxidase activity of the enzyme.

It catalyses the reaction H2O2 + AH2 = A + 2 H2O. It carries out the reaction 2 H2O2 = O2 + 2 H2O. In terms of biological role, bifunctional enzyme with both catalase and broad-spectrum peroxidase activity. The protein is Catalase-peroxidase of Shewanella baltica (strain OS195).